Here is an 83-residue protein sequence, read N- to C-terminus: MRLFLSLPVLVVVLSMVLEGPAPAQGAPDVSSALDKLKEFGNTLEDKAREVINRIKQSEFPAKTRDWFSETFRKVKEKLKINS.

The signal sequence occupies residues 1 to 26; sequence MRLFLSLPVLVVVLSMVLEGPAPAQG.

The protein belongs to the apolipoprotein C1 family.

The protein localises to the secreted. In terms of biological role, inhibitor of lipoprotein binding to the low density lipoprotein (LDL) receptor, LDL receptor-related protein, and very low density lipoprotein (VLDL) receptor. Associates with high density lipoproteins (HDL) and the triacylglycerol-rich lipoproteins in the plasma and makes up about 10% of the protein of the VLDL and 2% of that of HDL. Appears to interfere directly with fatty acid uptake and is also the major plasma inhibitor of cholesteryl ester transfer protein (CETP). Binds free fatty acids and reduces their intracellular esterification. Modulates the interaction of APOE with beta-migrating VLDL and inhibits binding of beta-VLDL to the LDL receptor-related protein. This chain is Apolipoprotein C-I, basic form (APOC1B), found in Colobus guereza (Mantled guereza).